A 436-amino-acid polypeptide reads, in one-letter code: Voltage-gated potassium channel regulatory subunit KCNG3 (436 aa).

Residues 1–168 (MTFGRSGAAS…RTFEEPTSSL (168 aa)) are Cytoplasmic-facing. Residues 169 to 190 (AAQILASVSVVFVIVSMVVLCA) form a helical membrane-spanning segment. At 191–220 (STLPDWRNAAADNRSLDDRSRYSAGPGREP) the chain is on the extracellular side. The helical transmembrane segment at 221-242 (SGIIEAICIGWFTAECIVRFIV) threads the bilayer. The Cytoplasmic portion of the chain corresponds to 243-253 (SKNKCEFVKRP). The helical transmembrane segment at 254 to 274 (LNIIDLLAITPYYISVLMTVF) threads the bilayer. Topologically, residues 275–284 (TGENSQLQRA) are extracellular. Residues 285 to 305 (GVTLRVLRMMRIFWVIKLARH) form a helical; Voltage-sensor membrane-spanning segment. Residues 306–320 (FIGLQTLGLTLKRCY) are Cytoplasmic-facing. Residues 321–342 (REMVMLLVFICVAMAIFSALSQ) traverse the membrane as a helical segment. The Extracellular segment spans residues 343–360 (LLEHGLDLETSNKDFTSI). The segment at residues 361 to 372 (PAACWWVIISMT) is an intramembrane region (helical). The short motif at 373–378 (TVGYGD) is the Selectivity filter element. An intramembrane segment occupies 373–380 (TVGYGDMY). Over 381–387 (PITVPGR) the chain is Extracellular. Residues 388–416 (ILGGVCVVSGIVLLALPITFIYHSFVQCY) form a helical membrane-spanning segment. The Cytoplasmic portion of the chain corresponds to 417–436 (HELKFRSARYSRSLSTEFLN).

Belongs to the potassium channel family. G (TC 1.A.1.2) subfamily. Kv6.3/KCNG3 sub-subfamily. In terms of assembly, heterotetramer with KCNB1. Does not form homomultimers. In terms of tissue distribution, expressed in the brain, liver, testis, small intestine, colon, thymus and adrenal gland.

The protein resides in the cell membrane. The protein localises to the cytoplasm. Functionally, regulatory subunit of the voltage-gated potassium (Kv) channel which, when coassembled with KCNB1, modulates the kinetics parameters of the heterotetrameric channel namely the inactivation and deactivation rate. Potassium channel subunit that does not form functional channels by itself. Reduces the deactivation rate. Moderately accelerates activation. The protein is Voltage-gated potassium channel regulatory subunit KCNG3 of Homo sapiens (Human).